Reading from the N-terminus, the 97-residue chain is UPF0250 protein RSc0326 (97 aa).

The protein belongs to the UPF0250 family.

This is UPF0250 protein RSc0326 from Ralstonia nicotianae (strain ATCC BAA-1114 / GMI1000) (Ralstonia solanacearum).